Here is a 442-residue protein sequence, read N- to C-terminus: HTH-type transcriptional regulator NorG (442 aa).

One can recognise an HTH gntR-type domain in the interval 2-46 (KIPPQRQLAIQYNVNRVTIIKSIELLEAEGFIYTKVGSGTYVNDY). A DNA-binding region (H-T-H motif) is located at residues 6–25 (QRQLAIQYNVNRVTIIKSIE). K288 carries the post-translational modification N6-(pyridoxal phosphate)lysine.

The protein in the C-terminal section; belongs to the class-I pyridoxal-phosphate-dependent aminotransferase family. It depends on pyridoxal 5'-phosphate as a cofactor.

Its function is as follows. Positively regulates the expression of the NorB efflux pump and negatively regulates the expression of the AbcA efflux pump. Binds specifically to the promoters of norA, norB and norC and abcA genes. Could also have an aminotransferase activity. The sequence is that of HTH-type transcriptional regulator NorG (norG) from Staphylococcus aureus (strain Mu50 / ATCC 700699).